Reading from the N-terminus, the 234-residue chain is NAD-dependent protein deacetylase (234 aa).

A Deacetylase sirtuin-type domain is found at 1–234; sequence MSDITAAQTT…AVDFFEGVQV (234 aa). The NAD(+) site is built by A23, T27, R35, Q99, I101, D102, H117, T184, S185, N208, and V226. Residues I101 and D102 each contribute to the nicotinamide site. The Proton acceptor role is filled by H117.

The protein belongs to the sirtuin family. Class U subfamily.

Its subcellular location is the cytoplasm. The enzyme catalyses N(6)-acetyl-L-lysyl-[protein] + NAD(+) + H2O = 2''-O-acetyl-ADP-D-ribose + nicotinamide + L-lysyl-[protein]. In terms of biological role, NAD-dependent protein deacetylase which modulates the activities of several enzymes which are inactive in their acetylated form. This chain is NAD-dependent protein deacetylase, found in Lactiplantibacillus plantarum (strain ATCC BAA-793 / NCIMB 8826 / WCFS1) (Lactobacillus plantarum).